Consider the following 134-residue polypeptide: Profilin-3 (134 aa).

Residues C13 and C118 are joined by a disulfide bond. The Involved in PIP2 interaction signature appears at 84–100 (AVIRGKKGSGGITIKKT). T114 carries the phosphothreonine modification.

It belongs to the profilin family. As to quaternary structure, occurs in many kinds of cells as a complex with monomeric actin in a 1:1 ratio. Phosphorylated by MAP kinases.

It is found in the cytoplasm. It localises to the cytoskeleton. Binds to actin and affects the structure of the cytoskeleton. At high concentrations, profilin prevents the polymerization of actin, whereas it enhances it at low concentrations. This is Profilin-3 from Olea europaea (Common olive).